A 490-amino-acid polypeptide reads, in one-letter code: MEVKDIDNYCDRGISPNASNYLTYPFDGLCLQKFFYQLQTSLRRFTPYEEIIYTTVYIIISVAAVIGNGLVIMAVVRKKTMRTNRNVLILNLALSNLILAITNIPFLWLPSIDFEFPYSRFFCKFANVLPGSNIYCSTLTISVMAIDRYYSVKKLKIASNRKQCFHAVLVSLAIWIVSFILSLPLLLYYETSMLYVMREIRVVDQSGQEVIRSYGWRQCRLVSAGRLPDITQSIQLLMSILQVAFLYIVPLFVLSIFNVKLTRFLKTNANKMSKTRAPPKRFDRSDSHHNSLKNNNNHTSSLRSPSMPSIRSSITERNKTNQRTNRTTSLLIAMAGSYAALWFPFTLITFLIDFELIINQDYVNLVERIDQTCKMVSMLSICVNPFLYGFLNTNFRHEFSDIYYRYIRCETKSQPAGRFHHDVSSIAHHRQDSVYNDEATLLTTGRQSNGKDGSSSPIGFRSSVRVCSGQTKMIGDRIVLDDDIEKDSFV.

At 1 to 55 the chain is on the extracellular side; sequence MEVKDIDNYCDRGISPNASNYLTYPFDGLCLQKFFYQLQTSLRRFTPYEEIIYTT. The N-linked (GlcNAc...) asparagine glycan is linked to N17. A helical transmembrane segment spans residues 56–76; sequence VYIIISVAAVIGNGLVIMAVV. Residues 77–86 are Cytoplasmic-facing; the sequence is RKKTMRTNRN. The helical transmembrane segment at 87–107 threads the bilayer; the sequence is VLILNLALSNLILAITNIPFL. The Extracellular segment spans residues 108–125; sequence WLPSIDFEFPYSRFFCKF. The chain crosses the membrane as a helical span at residues 126–146; sequence ANVLPGSNIYCSTLTISVMAI. Residues 147-166 are Cytoplasmic-facing; that stretch reads DRYYSVKKLKIASNRKQCFH. Residues 167–187 traverse the membrane as a helical segment; sequence AVLVSLAIWIVSFILSLPLLL. The Extracellular segment spans residues 188–236; that stretch reads YYETSMLYVMREIRVVDQSGQEVIRSYGWRQCRLVSAGRLPDITQSIQL. The chain crosses the membrane as a helical span at residues 237–257; sequence LMSILQVAFLYIVPLFVLSIF. Topologically, residues 258–331 are cytoplasmic; sequence NVKLTRFLKT…QRTNRTTSLL (74 aa). A disordered region spans residues 272–322; the sequence is MSKTRAPPKRFDRSDSHHNSLKNNNNHTSSLRSPSMPSIRSSITERNKTNQ. The segment covering 280-289 has biased composition (basic and acidic residues); it reads KRFDRSDSHH. Over residues 292–313 the composition is skewed to low complexity; that stretch reads LKNNNNHTSSLRSPSMPSIRSS. Residues 332–352 traverse the membrane as a helical segment; it reads IAMAGSYAALWFPFTLITFLI. The Extracellular segment spans residues 353–374; sequence DFELIINQDYVNLVERIDQTCK. Residues 375–395 form a helical membrane-spanning segment; sequence MVSMLSICVNPFLYGFLNTNF. Residues 396-490 lie on the Cytoplasmic side of the membrane; sequence RHEFSDIYYR…DDDIEKDSFV (95 aa).

The protein belongs to the G-protein coupled receptor 1 family.

The protein resides in the cell membrane. Not known. Putative receptor. In Caenorhabditis elegans, this protein is Probable G-protein coupled receptor npr-8.